A 111-amino-acid chain; its full sequence is Large ribosomal subunit protein uL24 (111 aa).

It belongs to the universal ribosomal protein uL24 family. In terms of assembly, part of the 50S ribosomal subunit.

In terms of biological role, one of two assembly initiator proteins, it binds directly to the 5'-end of the 23S rRNA, where it nucleates assembly of the 50S subunit. Its function is as follows. One of the proteins that surrounds the polypeptide exit tunnel on the outside of the subunit. The chain is Large ribosomal subunit protein uL24 from Cytophaga hutchinsonii (strain ATCC 33406 / DSM 1761 / CIP 103989 / NBRC 15051 / NCIMB 9469 / D465).